Reading from the N-terminus, the 239-residue chain is MVDKHIQAYKDYAKGMKYKDLAEKYGVSVNTIKSWKQRHGWQRKKGAPLKKGVHTKKVGAPLGNKNALGNNGGAPKGNQNAVTHGFFSKFLPEETLSIMEGIQERSPVDMIWDQIQIQYAAIIRAQKIMFVSDKQEMIKELKKKKSVLSETNEVEEEEFEFQFSWDRHATFLNAQSRAMAELRNLIKQFDELAHSEDERRLKLEHMRLNINKKKIEIEELTEEDKPFEITIVNKGDDSD.

This is an uncharacterized protein from Bacillus subtilis (strain 168).